The following is a 78-amino-acid chain: Probable cytochrome c oxidase subunit 6B (78 aa).

In terms of domain architecture, CHCH spans 21 to 64; sequence TKHCWANYVDYYGCVKHYNGDNSKCQTFFNSMNSLCPAAWISEW. The Cx9C motif signature appears at 24–34; it reads CWANYVDYYGC. Intrachain disulfides connect C24-C56 and C34-C45. Positions 45-56 match the Cx10C motif motif; sequence CQTFFNSMNSLC.

Belongs to the cytochrome c oxidase subunit 6B family. As to quaternary structure, component of the cytochrome c oxidase (complex IV, CIV), a multisubunit enzyme composed of a catalytic core of 3 subunits and several supernumerary subunits. The complex exists as a monomer or a dimer and forms supercomplexes (SCs) in the inner mitochondrial membrane with ubiquinol-cytochrome c oxidoreductase (cytochrome b-c1 complex, complex III, CIII).

The protein resides in the mitochondrion inner membrane. The protein operates within energy metabolism; oxidative phosphorylation. Its function is as follows. Component of the cytochrome c oxidase, the last enzyme in the mitochondrial electron transport chain which drives oxidative phosphorylation. The respiratory chain contains 3 multisubunit complexes succinate dehydrogenase (complex II, CII), ubiquinol-cytochrome c oxidoreductase (cytochrome b-c1 complex, complex III, CIII) and cytochrome c oxidase (complex IV, CIV), that cooperate to transfer electrons derived from NADH and succinate to molecular oxygen, creating an electrochemical gradient over the inner membrane that drives transmembrane transport and the ATP synthase. Cytochrome c oxidase is the component of the respiratory chain that catalyzes the reduction of oxygen to water. Electrons originating from reduced cytochrome c in the intermembrane space (IMS) are transferred via the dinuclear copper A center (CU(A)) of subunit 2 and heme A of subunit 1 to the active site in subunit 1, a binuclear center (BNC) formed by heme A3 and copper B (CU(B)). The BNC reduces molecular oxygen to 2 water molecules using 4 electrons from cytochrome c in the IMS and 4 protons from the mitochondrial matrix. This chain is Probable cytochrome c oxidase subunit 6B, found in Dictyostelium discoideum (Social amoeba).